A 481-amino-acid chain; its full sequence is Probable glycine dehydrogenase (decarboxylating) subunit 2 (481 aa).

The residue at position 269 (Lys-269) is an N6-(pyridoxal phosphate)lysine.

It belongs to the GcvP family. C-terminal subunit subfamily. The glycine cleavage system is composed of four proteins: P, T, L and H. In this organism, the P 'protein' is a heterodimer of two subunits. Pyridoxal 5'-phosphate is required as a cofactor.

It catalyses the reaction N(6)-[(R)-lipoyl]-L-lysyl-[glycine-cleavage complex H protein] + glycine + H(+) = N(6)-[(R)-S(8)-aminomethyldihydrolipoyl]-L-lysyl-[glycine-cleavage complex H protein] + CO2. In terms of biological role, the glycine cleavage system catalyzes the degradation of glycine. The P protein binds the alpha-amino group of glycine through its pyridoxal phosphate cofactor; CO(2) is released and the remaining methylamine moiety is then transferred to the lipoamide cofactor of the H protein. This is Probable glycine dehydrogenase (decarboxylating) subunit 2 from Chlorobium chlorochromatii (strain CaD3).